We begin with the raw amino-acid sequence, 467 residues long: Actinorhodin polyketide putative beta-ketoacyl synthase 1 (467 aa).

Residues 1-35 form a disordered region; that stretch reads MPLDAAPVDPASRGPVSAFEPPSSHGADDDDDHRT. Residues 45–459 enclose the Ketosynthase family 3 (KS3) domain; sequence KRRVVITGVG…GFQSAMVLRD (415 aa). Active-site for beta-ketoacyl synthase activity residues include cysteine 212, histidine 352, and histidine 389.

It belongs to the thiolase-like superfamily. Beta-ketoacyl-ACP synthases family.

The protein operates within antibiotic biosynthesis; actinorhodin biosynthesis. In Streptomyces coelicolor (strain ATCC BAA-471 / A3(2) / M145), this protein is Actinorhodin polyketide putative beta-ketoacyl synthase 1.